The sequence spans 422 residues: Histidine--tRNA ligase (422 aa).

It belongs to the class-II aminoacyl-tRNA synthetase family. Homodimer.

Its subcellular location is the cytoplasm. The enzyme catalyses tRNA(His) + L-histidine + ATP = L-histidyl-tRNA(His) + AMP + diphosphate + H(+). In Photobacterium profundum (strain SS9), this protein is Histidine--tRNA ligase (hisS).